Here is a 348-residue protein sequence, read N- to C-terminus: Photosystem II protein D1 (348 aa).

A run of 3 helical transmembrane segments spans residues 33-50, 122-137, and 146-160; these read YIGWFGILMFPLLVLATV, HFILGAGAYMGREWEF, and WIFVAFSAPLVAASA. Chlorophyll a is bound at residue H122. Y130 is a pheophytin a binding site. Positions 174 and 193 each coordinate [CaMn4O5] cluster. A helical transmembrane segment spans residues 201-222; sequence FHILGVAAVFGGSLFSAMHGSL. H202 provides a ligand contact to chlorophyll a. Residues H219 and 268–269 each bind a quinone; that span reads SF. H219 contributes to the Fe cation binding site. Fe cation is bound at residue H276. Residues 278–292 form a helical membrane-spanning segment; that stretch reads FLAAWPVIGIWFTAL. Positions 336, 337, 346, and 348 each coordinate [CaMn4O5] cluster.

Belongs to the reaction center PufL/M/PsbA/D family. PSII is composed of 1 copy each of membrane proteins PsbA, PsbB, PsbC, PsbD, PsbE, PsbF, PsbH, PsbI, PsbJ, PsbK, PsbL, PsbM, PsbT, PsbX, PsbY, PsbZ, Psb30/Ycf12, at least 3 peripheral proteins of the oxygen-evolving complex and a large number of cofactors. It forms dimeric complexes. The cofactor is The D1/D2 heterodimer binds P680, chlorophylls that are the primary electron donor of PSII, and subsequent electron acceptors. It shares a non-heme iron and each subunit binds pheophytin, quinone, additional chlorophylls, carotenoids and lipids. D1 provides most of the ligands for the Mn4-Ca-O5 cluster of the oxygen-evolving complex (OEC). There is also a Cl(-1) ion associated with D1 and D2, which is required for oxygen evolution. The PSII complex binds additional chlorophylls, carotenoids and specific lipids.. Tyr-165 forms a radical intermediate that is referred to as redox-active TyrZ, YZ or Y-Z.

It localises to the plastid. The protein resides in the chloroplast thylakoid membrane. It carries out the reaction 2 a plastoquinone + 4 hnu + 2 H2O = 2 a plastoquinol + O2. Photosystem II (PSII) is a light-driven water:plastoquinone oxidoreductase that uses light energy to abstract electrons from H(2)O, generating O(2) and a proton gradient subsequently used for ATP formation. It consists of a core antenna complex that captures photons, and an electron transfer chain that converts photonic excitation into a charge separation. The D1/D2 (PsbA/PsbD) reaction center heterodimer binds P680, the primary electron donor of PSII as well as several subsequent electron acceptors. The chain is Photosystem II protein D1 from Heterocapsa pygmaea (Dinoflagellate).